Consider the following 468-residue polypeptide: MAVAAALTGLQAEAKCSICLDYLSDPVTIECGHNFCRSCIQQSWLDLQELFPCPVCRHQCQEGHFRSNTQLGRMIEIAKLLQSTKSNKRKQEETTLCEKHNQPLSVFCKEDLMVLCPLCTQPPDHQGHHVRPIEKAAIHYRKRFCSYIQPLKKQLADLQKLISTQSKKPLELREMVENQRQELSSEFEHLNQFLDREQQAVLSRLAEEEKDNQQKLSANITAFSNYSATLKSQLSKVVELSELSELELLSQIKIFYESENESSPSIFSIHLKRDGCSFPPQYSALQRIIKKFKVEIILDPETAHPNLIVSEDKKRVRFTKRKQKVPGFPKRFTVKPVVLGFPYFHSGRHFWEIEVGDKSEWAIGICKDSLPTKARRPSSAQQECWRIELQDDGYHAPGAFPTPLLLEVKARAIGIFLDYEMGEISFYNMAEKSHICTFTDTFTGPLRPYFYVGPDSQPLRICTGTVCE.

The RING-type zinc finger occupies 16–57 (CSICLDYLSDPVTIECGHNFCRSCIQQSWLDLQELFPCPVCR). The B box-type zinc finger occupies 92–133 (EETTLCEKHNQPLSVFCKEDLMVLCPLCTQPPDHQGHHVRPI). The Zn(2+) site is built by cysteine 97, histidine 100, cysteine 119, and histidine 125. A coiled-coil region spans residues 170-222 (LELREMVENQRQELSSEFEHLNQFLDREQQAVLSRLAEEEKDNQQKLSANITA). The B30.2/SPRY domain maps to 276-468 (CSFPPQYSAL…LRICTGTVCE (193 aa)).

The protein belongs to the TRIM/RBCC family.

Its subcellular location is the cytoplasm. The protein localises to the cytoskeleton. It is found in the spindle. May play a role in female meiosis. The protein is Tripartite motif-containing protein 75 of Homo sapiens (Human).